A 381-amino-acid chain; its full sequence is Homoserine O-succinyltransferase (381 aa).

The region spanning 45–360 is the AB hydrolase-1 domain; the sequence is NAVLVCHALN…PHGHDAFLLD (316 aa). The active-site Nucleophile is Ser-151. Arg-221 is a substrate binding site. Active-site residues include Asp-321 and His-354. Asp-355 contributes to the substrate binding site.

This sequence belongs to the AB hydrolase superfamily. MetX family. In terms of assembly, homodimer.

Its subcellular location is the cytoplasm. It catalyses the reaction L-homoserine + succinyl-CoA = O-succinyl-L-homoserine + CoA. The protein operates within amino-acid biosynthesis; L-methionine biosynthesis via de novo pathway; O-succinyl-L-homoserine from L-homoserine: step 1/1. Functionally, transfers a succinyl group from succinyl-CoA to L-homoserine, forming succinyl-L-homoserine. In Paraburkholderia xenovorans (strain LB400), this protein is Homoserine O-succinyltransferase.